The primary structure comprises 296 residues: NAD kinase (296 aa).

The Proton acceptor role is filled by Asp-72. NAD(+) contacts are provided by residues 72–73, 146–147, Arg-157, Lys-174, Asp-176, 187–192, and Gln-247; these read DG, ND, and TAYALS.

The protein belongs to the NAD kinase family. It depends on a divalent metal cation as a cofactor.

The protein resides in the cytoplasm. The catalysed reaction is NAD(+) + ATP = ADP + NADP(+) + H(+). Involved in the regulation of the intracellular balance of NAD and NADP, and is a key enzyme in the biosynthesis of NADP. Catalyzes specifically the phosphorylation on 2'-hydroxyl of the adenosine moiety of NAD to yield NADP. The sequence is that of NAD kinase from Pseudomonas putida (strain W619).